The sequence spans 252 residues: Large ribosomal subunit protein uL10m (252 aa).

The N-terminal 24 residues, 1–24 (MAATLCCRLLPKAGWVPLTQSVRH), are a transit peptide targeting the mitochondrion.

This sequence belongs to the universal ribosomal protein uL10 family. Component of the mitochondrial ribosome large subunit (39S) which comprises a 16S rRNA and about 50 distinct proteins.

Its subcellular location is the mitochondrion. In Danio rerio (Zebrafish), this protein is Large ribosomal subunit protein uL10m (mrpl10).